Reading from the N-terminus, the 375-residue chain is Probable G-protein coupled receptor 34 (375 aa).

The Extracellular portion of the chain corresponds to 1–54 (MTTTSVDSWLCSSHGMHFITNYSDQASQNFSGVPNVTSCPMDEKLLSTVLTTFY). Residues Asn21, Asn29, and Asn35 are each glycosylated (N-linked (GlcNAc...) asparagine). The helical transmembrane segment at 55–75 (SVIFLVGLVGNIIALYVFLGI) threads the bilayer. At 76–81 (HRKRNS) the chain is on the cytoplasmic side. A helical transmembrane segment spans residues 82 to 102 (IQIYLLNVAVADLLLIFCLPF). At 103-121 (RIMYHINQNKWTLGVILCK) the chain is on the extracellular side. A disulfide bridge links Cys120 with Cys197. Residues 122–142 (VVGTLFYMNMYISIILLGFIS) form a helical membrane-spanning segment. The Cytoplasmic portion of the chain corresponds to 143 to 164 (LDRYIKINRSIQQRRAITTKQS). The chain crosses the membrane as a helical span at residues 165–185 (IYVCCIVWTVALAGFLTMIIL). Residues 186 to 209 (TLKKGGHNSTMCFHYRDRHNAKGE) are Extracellular-facing. An N-linked (GlcNAc...) asparagine glycan is attached at Asn193. Residues 210-230 (AIFNFVLVVMFWLIFLLIILS) traverse the membrane as a helical segment. At 231–262 (YIKIGKNLLRISKRRSKFPNSGKYATTARNSF) the chain is on the cytoplasmic side. A helical transmembrane segment spans residues 263–283 (IVLIIFTICFVPYHAFRFIYI). Over 284 to 303 (SSQLNVSSCYWKEIIHKTNE) the chain is Extracellular. Asn288 is a glycosylation site (N-linked (GlcNAc...) asparagine). The helical transmembrane segment at 304-324 (IMLVFSSFNSCLDPVMYFLMS) threads the bilayer. Residues 325–375 (SNIRKIMCQLLFRRFQSEASRSESTSEFKPGHSLHDLSVTVKMPQYSTKGN) are Cytoplasmic-facing.

The protein belongs to the G-protein coupled receptor 1 family. Highly expressed in glial cells such as astrocytes and microglia.

Its subcellular location is the cell membrane. Its function is as follows. G-protein-coupled receptor of lysophosphatidylserine (LysoPS) that plays different roles in immune response. Acts a damage-sensing receptor that triggers tissue repair upon recognition of dying neutrophils. Mechanistically, apoptotic neutrophils release lysophosphatydilserine that are recognized by type 3 innate lymphoid cells (ILC3s) via GPR34, which activates downstream PI3K-AKT and RAS-ERK signaling pathways leading to STAT3 activation and IL-22 production. Plays an important role in microglial function, controlling morphology and phagocytosis. This is Probable G-protein coupled receptor 34 (Gpr34) from Mus musculus (Mouse).